Reading from the N-terminus, the 178-residue chain is Long polar fimbria protein A (178 aa).

Positions 1–24 are cleaved as a signal peptide; the sequence is MEFLMKKVVFALSALAVVSTSAFA.

The protein belongs to the fimbrial protein family.

Its subcellular location is the fimbrium. The sequence is that of Long polar fimbria protein A (lpfA) from Salmonella typhimurium (strain LT2 / SGSC1412 / ATCC 700720).